The sequence spans 427 residues: MAIYAVVGTQWGDEGKGKIIDFLSSKIDYVVRFNGGNNAGHTIVVNDKKFIFNLLPSGVLQGAKCILGPSVVIDPLILIQELEVLKNNNIKTEIFISDKAHIIMPYHIKFDELSEQKKGIHKIGTTKKGIGPCYADKINRIGIRTIDLLNTEIFANKLKTNLEEKNQIIEKIYNDKPLDYDDILNTYKKYIEILKSLITNTEKILHHAINSEKHILIEGAQGTMLDIEHGTFPFVTSSNTLITAAAGCGIPISKIKQKIGIIKAFSSRVGSGPFVTEISNSIGDIIREKGQEYGSTTKRPRRIGWLDLLTIKKAIALNELNHLALTKLDILNNIESLKICTAYEFQGKIYDYIPTSCETIEKVRPIYKVFKGFKEDISNIKNYDDLPIEAREYIEFIEKEVGIQISILSVGSEREKTIFRNQEWSNI.

GTP contacts are provided by residues 12-18 and 40-42; these read GDEGKGK and GHT. The active-site Proton acceptor is D13. D13 and G40 together coordinate Mg(2+). Residues 13 to 16, 38 to 41, T126, R140, Q221, T236, and R299 each bind IMP; these read DEGK and NAGH. H41 acts as the Proton donor in catalysis. 295-301 is a substrate binding site; it reads STTKRPR. GTP is bound by residues R301, 327 to 329, and 409 to 411; these read KLD and SVG.

It belongs to the adenylosuccinate synthetase family. In terms of assembly, homodimer. The cofactor is Mg(2+).

Its subcellular location is the cytoplasm. The enzyme catalyses IMP + L-aspartate + GTP = N(6)-(1,2-dicarboxyethyl)-AMP + GDP + phosphate + 2 H(+). Its pathway is purine metabolism; AMP biosynthesis via de novo pathway; AMP from IMP: step 1/2. In terms of biological role, plays an important role in the de novo pathway of purine nucleotide biosynthesis. Catalyzes the first committed step in the biosynthesis of AMP from IMP. This is Adenylosuccinate synthetase from Borrelia duttonii (strain Ly).